Consider the following 274-residue polypeptide: MRRVALKIAYIGSNFHGYQRQPNYRTVEGELLRVFKETNIIEDTWTAHYSVAGRTDKGVHSTGNVISFITDEDIHINQLNGLLPDDIKIIGEARVPYGFKVRFPLTRTYTYIQPISPFEKKNLDITKMHVAMESFIGKHNFRNFSKRNEKNPNRKIIDVNLEVDEDVLIFTIVGESFLWNMVRKMVTSIMEVGYGKLDINDINELLKPKELRQFIRLQPAPANGLILSDMEYKNIKFKDSEYAKNKLVEFLKKEYMLHEQEKKADCRLIKILKK.

D56 acts as the Nucleophile in catalysis. Position 109 (Y109) interacts with substrate.

It belongs to the tRNA pseudouridine synthase TruA family.

It carries out the reaction uridine(38/39/40) in tRNA = pseudouridine(38/39/40) in tRNA. In terms of biological role, formation of pseudouridine at positions 38, 39 and 40 in the anticodon stem and loop of transfer RNAs. The polypeptide is tRNA pseudouridine synthase A (Methanosphaera stadtmanae (strain ATCC 43021 / DSM 3091 / JCM 11832 / MCB-3)).